The chain runs to 541 residues: Zinc finger protein 513 (541 aa).

The disordered stretch occupies residues 1–120 (MPRRKQSHPQ…ARGERPGPAC (120 aa)). The span at 44–55 (LEFEEEEEEEEG) shows a compositional bias: acidic residues. Residues serine 85 and serine 96 each carry the phosphoserine modification. The span at 103–115 (EPARGPGEARGER) shows a compositional bias: basic and acidic residues. 8 consecutive C2H2-type zinc fingers follow at residues 150 to 172 (YSCR…MQTH), 178 to 200 (FRCG…TRTH), 206 to 228 (YRCP…QRTH), 360 to 382 (FACS…MKTH), 388 to 410 (FRCA…QRVH), 416 to 438 (YKCP…GRIH), 444 to 466 (FRCS…MLRH), and 472 to 494 (FRCA…QKVH). The interval 492–541 (KVHGHGGAGGPGLSAPEGWAPPHSPPSVLSTRGSAALGATGSRALHTDSP) is disordered.

Belongs to the krueppel C2H2-type zinc-finger protein family. Binds DNA. Can associate with the proximal promoter regions of PAX6 and SP4, and their known targets including ARR3, RHO, OPN1MW2 and OPN1SW.

It is found in the nucleus. Transcriptional regulator that plays a role in retinal development and maintenance. This Rattus norvegicus (Rat) protein is Zinc finger protein 513 (Znf513).